We begin with the raw amino-acid sequence, 290 residues long: tRNA-cytidine(32) 2-sulfurtransferase (290 aa).

Residues 66–71 carry the PP-loop motif motif; the sequence is SGGKDS. [4Fe-4S] cluster contacts are provided by Cys141, Cys144, and Cys232.

The protein belongs to the TtcA family. As to quaternary structure, homodimer. Requires Mg(2+) as cofactor. [4Fe-4S] cluster is required as a cofactor.

Its subcellular location is the cytoplasm. The enzyme catalyses cytidine(32) in tRNA + S-sulfanyl-L-cysteinyl-[cysteine desulfurase] + AH2 + ATP = 2-thiocytidine(32) in tRNA + L-cysteinyl-[cysteine desulfurase] + A + AMP + diphosphate + H(+). The protein operates within tRNA modification. In terms of biological role, catalyzes the ATP-dependent 2-thiolation of cytidine in position 32 of tRNA, to form 2-thiocytidine (s(2)C32). The sulfur atoms are provided by the cysteine/cysteine desulfurase (IscS) system. This chain is tRNA-cytidine(32) 2-sulfurtransferase, found in Rhizobium etli (strain ATCC 51251 / DSM 11541 / JCM 21823 / NBRC 15573 / CFN 42).